The chain runs to 163 residues: Ribosome maturation factor RimM (163 aa).

Residues 94 to 162 (ADEYYYIDLI…DHLVIAADFI (69 aa)) enclose the PRC barrel domain.

Belongs to the RimM family. As to quaternary structure, binds ribosomal protein uS19.

It localises to the cytoplasm. Its function is as follows. An accessory protein needed during the final step in the assembly of 30S ribosomal subunit, possibly for assembly of the head region. Essential for efficient processing of 16S rRNA. May be needed both before and after RbfA during the maturation of 16S rRNA. It has affinity for free ribosomal 30S subunits but not for 70S ribosomes. The protein is Ribosome maturation factor RimM of Zymomonas mobilis subsp. mobilis (strain ATCC 31821 / ZM4 / CP4).